A 436-amino-acid polypeptide reads, in one-letter code: GTPase Der (436 aa).

2 EngA-type G domains span residues 4–167 (PTVA…PTEV) and 175–351 (IRFS…ESQN). GTP is bound by residues 10 to 17 (GRPNVGKS), 57 to 61 (DTGGI), 119 to 122 (NKVD), 181 to 188 (GRPNVGKS), 229 to 233 (DTAGM), and 294 to 297 (NKWD). Residues 352–436 (RRISSAVLND…PIHLIARKRK (85 aa)) enclose the KH-like domain.

It belongs to the TRAFAC class TrmE-Era-EngA-EngB-Septin-like GTPase superfamily. EngA (Der) GTPase family. In terms of assembly, associates with the 50S ribosomal subunit.

Functionally, GTPase that plays an essential role in the late steps of ribosome biogenesis. The sequence is that of GTPase Der from Streptococcus thermophilus (strain ATCC BAA-491 / LMD-9).